Here is a 100-residue protein sequence, read N- to C-terminus: MITEERILKVLRAPHISEKATMAAEKANTIVFKVAKDATKKEIKAAVEKLFEVEVKSVNTLVLKGKTKRQGMREGRRSDVKKAYVTLKEGQDLDFVGGAE.

It belongs to the universal ribosomal protein uL23 family. Part of the 50S ribosomal subunit. Contacts protein L29, and trigger factor when it is bound to the ribosome.

Its function is as follows. One of the early assembly proteins it binds 23S rRNA. One of the proteins that surrounds the polypeptide exit tunnel on the outside of the ribosome. Forms the main docking site for trigger factor binding to the ribosome. This is Large ribosomal subunit protein uL23 from Vibrio atlanticus (strain LGP32) (Vibrio splendidus (strain Mel32)).